We begin with the raw amino-acid sequence, 343 residues long: Phosphoribosylformylglycinamidine cyclo-ligase (343 aa).

Belongs to the AIR synthase family.

It is found in the cytoplasm. It carries out the reaction 2-formamido-N(1)-(5-O-phospho-beta-D-ribosyl)acetamidine + ATP = 5-amino-1-(5-phospho-beta-D-ribosyl)imidazole + ADP + phosphate + H(+). It functions in the pathway purine metabolism; IMP biosynthesis via de novo pathway; 5-amino-1-(5-phospho-D-ribosyl)imidazole from N(2)-formyl-N(1)-(5-phospho-D-ribosyl)glycinamide: step 2/2. The sequence is that of Phosphoribosylformylglycinamidine cyclo-ligase from Enterococcus faecalis (strain ATCC 700802 / V583).